A 257-amino-acid polypeptide reads, in one-letter code: GTP cyclohydrolase FolE2 (257 aa).

It belongs to the GTP cyclohydrolase IV family.

It carries out the reaction GTP + H2O = 7,8-dihydroneopterin 3'-triphosphate + formate + H(+). It participates in cofactor biosynthesis; 7,8-dihydroneopterin triphosphate biosynthesis; 7,8-dihydroneopterin triphosphate from GTP: step 1/1. In terms of biological role, converts GTP to 7,8-dihydroneopterin triphosphate. The protein is GTP cyclohydrolase FolE2 of Dictyoglomus turgidum (strain DSM 6724 / Z-1310).